Here is a 343-residue protein sequence, read N- to C-terminus: MRIGILTGGGDCPGLNAVIRAIVRTCDARYGSSVVGFQDGWRGLLENRRMQLCNDDRNDRLLAKGGTMLGTAHVHPDKLRAGLHQIKQTLDDNGIDVLIPIGGEGTLTAAHWLSQEDVPVVGVPKTIDNDIDCTDVTFGHDTALTVATEAIDRLHSTAESHQRVMLVEVMGRHAGWIALSSGLASGAHMTLIPEQPFDVEEVCCLVKRRFQRGDSHFICVVAEGAKPVPGSITLRQGGMDEFGHERFTGVAAQLGAEVEKRINKDVRVTVLGHVQRGGTPTAFDRVLATRFGVNAADASHAGEYGQMVSLRGQDIGRVPLEDAVRQLKLVPESRYDDAAAFFG.

ATP is bound by residues Gly10 and 103–106 (GEGT). Glu104 contributes to the Mg(2+) binding site. Substrate-binding positions include 126-128 (TID), Arg163, 170-172 (MGR), Glu223, Arg267, and 273-276 (HVQR). Residue Asp128 is the Proton acceptor of the active site.

This sequence belongs to the phosphofructokinase type A (PFKA) family. Mixed-substrate PFK group III subfamily. As to quaternary structure, homodimer or homotetramer. Requires Mg(2+) as cofactor.

The protein resides in the cytoplasm. The catalysed reaction is beta-D-fructose 6-phosphate + ATP = beta-D-fructose 1,6-bisphosphate + ADP + H(+). The protein operates within carbohydrate degradation; glycolysis; D-glyceraldehyde 3-phosphate and glycerone phosphate from D-glucose: step 3/4. Catalyzes the phosphorylation of D-fructose 6-phosphate to fructose 1,6-bisphosphate by ATP, the first committing step of glycolysis. The chain is ATP-dependent 6-phosphofructokinase from Mycobacterium leprae (strain TN).